The primary structure comprises 465 residues: 23S rRNA (uracil(1939)-C(5))-methyltransferase RlmD (465 aa).

The interval Met1–Asp20 is disordered. Positions Ala12–Asp80 constitute a TRAM domain. [4Fe-4S] cluster contacts are provided by Cys93, Cys99, Cys102, and Cys181. Residues Gln289, Phe318, Asn323, Glu339, Asn367, and Asp388 each coordinate S-adenosyl-L-methionine. The active-site Nucleophile is Cys421.

The protein belongs to the class I-like SAM-binding methyltransferase superfamily. RNA M5U methyltransferase family. RlmD subfamily.

It carries out the reaction uridine(1939) in 23S rRNA + S-adenosyl-L-methionine = 5-methyluridine(1939) in 23S rRNA + S-adenosyl-L-homocysteine + H(+). Its function is as follows. Catalyzes the formation of 5-methyl-uridine at position 1939 (m5U1939) in 23S rRNA. This chain is 23S rRNA (uracil(1939)-C(5))-methyltransferase RlmD, found in Burkholderia thailandensis (strain ATCC 700388 / DSM 13276 / CCUG 48851 / CIP 106301 / E264).